The following is a 419-amino-acid chain: Multifunctional CCA protein (419 aa).

Residues Gly-8 and Arg-11 each coordinate ATP. The CTP site is built by Gly-8 and Arg-11. Mg(2+) is bound by residues Asp-21 and Asp-23. Positions 91, 141, and 144 each coordinate ATP. CTP is bound by residues Arg-91, Arg-141, and Arg-144. Positions 230-331 (TGVHVMMVLD…VRLLERCDAL (102 aa)) constitute an HD domain.

The protein belongs to the tRNA nucleotidyltransferase/poly(A) polymerase family. Bacterial CCA-adding enzyme type 1 subfamily. As to quaternary structure, monomer. Can also form homodimers and oligomers. Requires Mg(2+) as cofactor. The cofactor is Ni(2+).

It catalyses the reaction a tRNA precursor + 2 CTP + ATP = a tRNA with a 3' CCA end + 3 diphosphate. It carries out the reaction a tRNA with a 3' CCA end + 2 CTP + ATP = a tRNA with a 3' CCACCA end + 3 diphosphate. In terms of biological role, catalyzes the addition and repair of the essential 3'-terminal CCA sequence in tRNAs without using a nucleic acid template. Adds these three nucleotides in the order of C, C, and A to the tRNA nucleotide-73, using CTP and ATP as substrates and producing inorganic pyrophosphate. tRNA 3'-terminal CCA addition is required both for tRNA processing and repair. Also involved in tRNA surveillance by mediating tandem CCA addition to generate a CCACCA at the 3' terminus of unstable tRNAs. While stable tRNAs receive only 3'-terminal CCA, unstable tRNAs are marked with CCACCA and rapidly degraded. This chain is Multifunctional CCA protein, found in Paracidovorax citrulli (strain AAC00-1) (Acidovorax citrulli).